A 280-amino-acid chain; its full sequence is 4-diphosphocytidyl-2-C-methyl-D-erythritol kinase (280 aa).

The active site involves K11. P95–S105 contributes to the ATP binding site. The active site involves D137.

The protein belongs to the GHMP kinase family. IspE subfamily.

It catalyses the reaction 4-CDP-2-C-methyl-D-erythritol + ATP = 4-CDP-2-C-methyl-D-erythritol 2-phosphate + ADP + H(+). Its pathway is isoprenoid biosynthesis; isopentenyl diphosphate biosynthesis via DXP pathway; isopentenyl diphosphate from 1-deoxy-D-xylulose 5-phosphate: step 3/6. Its function is as follows. Catalyzes the phosphorylation of the position 2 hydroxy group of 4-diphosphocytidyl-2C-methyl-D-erythritol. In Pelobacter propionicus (strain DSM 2379 / NBRC 103807 / OttBd1), this protein is 4-diphosphocytidyl-2-C-methyl-D-erythritol kinase.